Reading from the N-terminus, the 226-residue chain is Enolase-phosphatase E1 (226 aa).

This sequence belongs to the HAD-like hydrolase superfamily. MasA/MtnC family. As to quaternary structure, monomer. Mg(2+) is required as a cofactor.

The catalysed reaction is 5-methylsulfanyl-2,3-dioxopentyl phosphate + H2O = 1,2-dihydroxy-5-(methylsulfanyl)pent-1-en-3-one + phosphate. It participates in amino-acid biosynthesis; L-methionine biosynthesis via salvage pathway; L-methionine from S-methyl-5-thio-alpha-D-ribose 1-phosphate: step 3/6. It functions in the pathway amino-acid biosynthesis; L-methionine biosynthesis via salvage pathway; L-methionine from S-methyl-5-thio-alpha-D-ribose 1-phosphate: step 4/6. Functionally, bifunctional enzyme that catalyzes the enolization of 2,3-diketo-5-methylthiopentyl-1-phosphate (DK-MTP-1-P) into the intermediate 2-hydroxy-3-keto-5-methylthiopentenyl-1-phosphate (HK-MTPenyl-1-P), which is then dephosphorylated to form the acireductone 1,2-dihydroxy-3-keto-5-methylthiopentene (DHK-MTPene). This is Enolase-phosphatase E1 from Shewanella putrefaciens (strain CN-32 / ATCC BAA-453).